We begin with the raw amino-acid sequence, 92 residues long: Small ribosomal subunit protein uS19 (92 aa).

The protein belongs to the universal ribosomal protein uS19 family.

Its function is as follows. Protein S19 forms a complex with S13 that binds strongly to the 16S ribosomal RNA. This Trichormus variabilis (strain ATCC 29413 / PCC 7937) (Anabaena variabilis) protein is Small ribosomal subunit protein uS19.